Consider the following 339-residue polypeptide: Ketol-acid reductoisomerase (NADP(+)) (339 aa).

Residues 1–182 enclose the KARI N-terminal Rossmann domain; the sequence is MRVYYDRDAD…GGGRAGIIET (182 aa). Residues 24–27, R48, S51, S53, and 83–86 each bind NADP(+); these read YGSQ and DELQ. The active site involves H108. Residue G134 coordinates NADP(+). Residues 183–328 enclose the KARI C-terminal knotted domain; that stretch reads TFREECETDL…AKLRDMMPWI (146 aa). Residues D191, E195, E227, and E231 each contribute to the Mg(2+) site. Residue S252 participates in substrate binding.

The protein belongs to the ketol-acid reductoisomerase family. The cofactor is Mg(2+).

It catalyses the reaction (2R)-2,3-dihydroxy-3-methylbutanoate + NADP(+) = (2S)-2-acetolactate + NADPH + H(+). It carries out the reaction (2R,3R)-2,3-dihydroxy-3-methylpentanoate + NADP(+) = (S)-2-ethyl-2-hydroxy-3-oxobutanoate + NADPH + H(+). It functions in the pathway amino-acid biosynthesis; L-isoleucine biosynthesis; L-isoleucine from 2-oxobutanoate: step 2/4. Its pathway is amino-acid biosynthesis; L-valine biosynthesis; L-valine from pyruvate: step 2/4. Functionally, involved in the biosynthesis of branched-chain amino acids (BCAA). Catalyzes an alkyl-migration followed by a ketol-acid reduction of (S)-2-acetolactate (S2AL) to yield (R)-2,3-dihydroxy-isovalerate. In the isomerase reaction, S2AL is rearranged via a Mg-dependent methyl migration to produce 3-hydroxy-3-methyl-2-ketobutyrate (HMKB). In the reductase reaction, this 2-ketoacid undergoes a metal-dependent reduction by NADPH to yield (R)-2,3-dihydroxy-isovalerate. This chain is Ketol-acid reductoisomerase (NADP(+)), found in Rhodopseudomonas palustris (strain ATCC BAA-98 / CGA009).